Reading from the N-terminus, the 507-residue chain is MEELQGYLEIDRSRQQHFLYPLLFQEYIYALAHDHGLNGSIFYEPMENFGYDNKSSSLIVKRLITRMHQQNHLILSVNDSNESIFVGHNKNFYFQMVSEGFAVIMEIPFSLRLVSSLEEKEIAKSHNSRSIHSIFPFFEDKLSHLNHVSDILIPHPIHLEILVQTLHCWIQDAPSLHLLRFFLHEYRNSNSLITPKKSISLFSKENQRFFLLLYNSHVYECESVLVFLRKQSSHLRSTSSGTFLERTHFYGKIEHLVVVLRNDFQKTLWLFKDPFMHYVRYQGKSILASKGTHLLMKKWKSHLVHFWQCHFYLWSLPDRIHINQLYNHFLYFLGYLSSVRLNTSVVRIQMLENSFLIDTSINKFETLVPIIPLIGSVAKAKFCNVSGHPISKSVRADSSDSDIINRFGRIYRNLSHYHSGSSKKQTLYRIKYILRLSCARTLARKHKSTVRAFLKRLGSEFLEEFLTEEEQVLSLIFQRTSSPSYRSHRERIWYLDIIRINDLANHS.

The protein belongs to the intron maturase 2 family. MatK subfamily.

The protein resides in the plastid. The protein localises to the chloroplast. Usually encoded in the trnK tRNA gene intron. Probably assists in splicing its own and other chloroplast group II introns. The polypeptide is Maturase K (Magnolia champaca (Yellow jade orchid tree)).